The primary structure comprises 392 residues: Pectate lyase 3 (392 aa).

The N-terminal stretch at 1 to 25 is a signal peptide; that stretch reads MGIKHCCYILYFTLALVTLLQPVRS. Residue Asn-37 is glycosylated (N-linked (GlcNAc...) asparagine). Cys-54 and Cys-71 are joined by a disulfide. Positions 194, 218, and 222 each coordinate Ca(2+). Arg-270 is a catalytic residue.

This sequence belongs to the polysaccharide lyase 1 family. Amb a subfamily. In terms of assembly, monomer. The cofactor is Ca(2+). The N-terminus is blocked. As to expression, pollen and flowers.

It catalyses the reaction Eliminative cleavage of (1-&gt;4)-alpha-D-galacturonan to give oligosaccharides with 4-deoxy-alpha-D-galact-4-enuronosyl groups at their non-reducing ends.. The protein operates within glycan metabolism; pectin degradation; 2-dehydro-3-deoxy-D-gluconate from pectin: step 2/5. Has pectate lyase activity. In Ambrosia artemisiifolia (Common ragweed), this protein is Pectate lyase 3.